Reading from the N-terminus, the 293-residue chain is 4-hydroxy-tetrahydrodipicolinate synthase (293 aa).

Thr47 lines the pyruvate pocket. The active-site Proton donor/acceptor is the Tyr136. Residue Lys164 is the Schiff-base intermediate with substrate of the active site. Residue Ile206 coordinates pyruvate.

It belongs to the DapA family. Homotetramer; dimer of dimers.

Its subcellular location is the cytoplasm. It catalyses the reaction L-aspartate 4-semialdehyde + pyruvate = (2S,4S)-4-hydroxy-2,3,4,5-tetrahydrodipicolinate + H2O + H(+). It functions in the pathway amino-acid biosynthesis; L-lysine biosynthesis via DAP pathway; (S)-tetrahydrodipicolinate from L-aspartate: step 3/4. Its function is as follows. Catalyzes the condensation of (S)-aspartate-beta-semialdehyde [(S)-ASA] and pyruvate to 4-hydroxy-tetrahydrodipicolinate (HTPA). This is 4-hydroxy-tetrahydrodipicolinate synthase from Listeria innocua serovar 6a (strain ATCC BAA-680 / CLIP 11262).